A 469-amino-acid polypeptide reads, in one-letter code: tRNA modification GTPase MnmE (469 aa).

(6S)-5-formyl-5,6,7,8-tetrahydrofolate contacts are provided by Arg-26, Glu-88, and Arg-127. Positions 222–390 (GLKVAIVGRP…LEDAILHLVQ (169 aa)) constitute a TrmE-type G domain. Residue Asn-232 participates in K(+) binding. GTP contacts are provided by residues 232 to 237 (NVGKSS), 251 to 257 (TDLPGTT), 276 to 279 (DTAG), and 344 to 347 (NKAD). Ser-236 provides a ligand contact to Mg(2+). Thr-251, Leu-253, and Thr-256 together coordinate K(+). Thr-257 is a binding site for Mg(2+). Lys-469 is a (6S)-5-formyl-5,6,7,8-tetrahydrofolate binding site.

It belongs to the TRAFAC class TrmE-Era-EngA-EngB-Septin-like GTPase superfamily. TrmE GTPase family. In terms of assembly, homodimer. Heterotetramer of two MnmE and two MnmG subunits. Requires K(+) as cofactor.

The protein resides in the cytoplasm. Exhibits a very high intrinsic GTPase hydrolysis rate. Involved in the addition of a carboxymethylaminomethyl (cmnm) group at the wobble position (U34) of certain tRNAs, forming tRNA-cmnm(5)s(2)U34. This Synechococcus elongatus protein is tRNA modification GTPase MnmE.